The sequence spans 326 residues: tRNA-modifying protein YgfZ (326 aa).

W27 and W189 together coordinate folate.

The protein belongs to the tRNA-modifying YgfZ family.

The protein resides in the cytoplasm. Functionally, folate-binding protein involved in regulating the level of ATP-DnaA and in the modification of some tRNAs. It is probably a key factor in regulatory networks that act via tRNA modification, such as initiation of chromosomal replication. The chain is tRNA-modifying protein YgfZ from Salmonella paratyphi C (strain RKS4594).